Reading from the N-terminus, the 871-residue chain is Protein translocase subunit SecA (871 aa).

ATP-binding positions include Q80, 98 to 102, and D537; that span reads GEGKT.

The protein belongs to the SecA family. In terms of assembly, monomer and homodimer. Part of the essential Sec protein translocation apparatus which comprises SecA, SecYEG and auxiliary proteins SecDF. Other proteins may also be involved. A single SecA monomer interacts with SecY in the channel.

It localises to the cell inner membrane. The protein localises to the cytoplasm. It carries out the reaction ATP + H2O + cellular proteinSide 1 = ADP + phosphate + cellular proteinSide 2.. In terms of biological role, part of the Sec protein translocase complex. Interacts with the SecYEG preprotein conducting channel. Has a central role in coupling the hydrolysis of ATP to the transfer of proteins into and across the cell membrane, serving as an ATP-driven molecular motor driving the stepwise translocation of polypeptide chains across the membrane. In Thermotoga maritima (strain ATCC 43589 / DSM 3109 / JCM 10099 / NBRC 100826 / MSB8), this protein is Protein translocase subunit SecA.